Here is a 122-residue protein sequence, read N- to C-terminus: Ribosome-binding factor A (122 aa).

This sequence belongs to the RbfA family. Monomer. Binds 30S ribosomal subunits, but not 50S ribosomal subunits or 70S ribosomes.

Its subcellular location is the cytoplasm. One of several proteins that assist in the late maturation steps of the functional core of the 30S ribosomal subunit. Associates with free 30S ribosomal subunits (but not with 30S subunits that are part of 70S ribosomes or polysomes). Required for efficient processing of 16S rRNA. May interact with the 5'-terminal helix region of 16S rRNA. The chain is Ribosome-binding factor A from Moorella thermoacetica (strain ATCC 39073 / JCM 9320).